A 305-amino-acid chain; its full sequence is Putative lipid kinase SaurJH9_0749 (305 aa).

Residues 3-139 (NKYTHGVLFY…YDVIKINNQY (137 aa)) form the DAGKc domain. Residues serine 44, 74–80 (GDGTVNE), and threonine 101 contribute to the ATP site. Serine 220, aspartate 223, and glutamate 225 together coordinate Mg(2+). Catalysis depends on glutamate 281, which acts as the Proton acceptor.

It belongs to the diacylglycerol/lipid kinase family. Requires Mg(2+) as cofactor.

May catalyze the ATP-dependent phosphorylation of lipids other than diacylglycerol (DAG). This chain is Putative lipid kinase SaurJH9_0749, found in Staphylococcus aureus (strain JH9).